A 70-amino-acid chain; its full sequence is Biotin carboxyl carrier protein of acetyl-CoA carboxylase (70 aa).

In terms of domain architecture, Biotinyl-binding spans 1-69 (GTVVAPMVGL…QDGIKLFALK (69 aa)). N6-biotinyllysine is present on Lys-35.

The protein resides in the plastid. It is found in the chloroplast. Its pathway is lipid metabolism; fatty acid biosynthesis. In terms of biological role, this protein is a component of the acetyl coenzyme A carboxylase complex; first, biotin carboxylase catalyzes the carboxylation of the carrier protein and then the transcarboxylase transfers the carboxyl group to form malonyl-CoA. This Solanum lycopersicum (Tomato) protein is Biotin carboxyl carrier protein of acetyl-CoA carboxylase.